Consider the following 111-residue polypeptide: Fertilization-influencing membrane protein (111 aa).

An N-terminal signal peptide occupies residues 1–23 (MKLWLWVAVGVWMLMAELGTIET). Residues 85–105 (ILVGTLVVAFFFLLFQFCLHV) form a helical membrane-spanning segment.

Testis-specific.

The protein resides in the cell membrane. Its subcellular location is the secreted. Its function is as follows. Plays a role in sperm-oocyte fusion process during fertilization. This Mus musculus (Mouse) protein is Fertilization-influencing membrane protein.